The chain runs to 30 residues: Cyclotide cter-Q (30 aa).

A cross-link (cyclopeptide (Gly-Asn)) is located at residues 1 to 30 (GIPCGESCVFIPCISTVIGCSCKNKVCYRN). Cystine bridges form between Cys-4-Cys-20, Cys-8-Cys-22, and Cys-13-Cys-27.

This is a cyclic peptide.

It is found in the secreted. Probably participates in a plant defense mechanism. The protein is Cyclotide cter-Q of Clitoria ternatea (Butterfly pea).